A 422-amino-acid polypeptide reads, in one-letter code: Enolase (422 aa).

Residue Q162 coordinates (2R)-2-phosphoglycerate. The active-site Proton donor is E204. Mg(2+) contacts are provided by D241, E284, and D311. Residues K336, R365, S366, and K387 each coordinate (2R)-2-phosphoglycerate. K336 acts as the Proton acceptor in catalysis.

Belongs to the enolase family. In terms of assembly, component of the RNA degradosome, a multiprotein complex involved in RNA processing and mRNA degradation. Mg(2+) is required as a cofactor.

It localises to the cytoplasm. Its subcellular location is the secreted. The protein localises to the cell surface. The enzyme catalyses (2R)-2-phosphoglycerate = phosphoenolpyruvate + H2O. Its pathway is carbohydrate degradation; glycolysis; pyruvate from D-glyceraldehyde 3-phosphate: step 4/5. Its function is as follows. Catalyzes the reversible conversion of 2-phosphoglycerate (2-PG) into phosphoenolpyruvate (PEP). It is essential for the degradation of carbohydrates via glycolysis. In Legionella pneumophila (strain Lens), this protein is Enolase.